The chain runs to 710 residues: Iron-sulfur clusters transporter ATM1, mitochondrial (710 aa).

Residues 1-38 (MWLSLPRSGYGSVATLTSKRVLACLTPLRQFSTSPAVS) constitute a mitochondrion transit peptide. Over residues 35-52 (PAVSNANHKNVDNINKSP) the composition is skewed to polar residues. The interval 35–83 (PAVSNANHKNVDNINKSPANDAANNAVEKGDKPTTSPEKLATKAEKSSA) is disordered. The Mitochondrial matrix portion of the chain corresponds to 39 to 129 (NANHKNVDNI…PKGKTSVKFR (91 aa)). Residues 130 to 151 (VLVAVALLVGAKLLNVQVPFFF) form a helical membrane-spanning segment. Positions 130 to 419 (VLVAVALLVG…LGSVYRDLRQ (290 aa)) constitute an ABC transmembrane type-1 domain. The Mitochondrial intermembrane segment spans residues 152 to 173 (KEIIDDMNIEWNSATALGVGIT). The chain crosses the membrane as a helical span at residues 174–197 (ALIFSYGAARFGAVLFGELRNAIF). At 198 to 246 (ASVAQKAIKEVATNVFRHLLKLDMAFHLSRQTGGITRAIDRGTKGISFV) the chain is on the mitochondrial matrix side. Residues 247-270 (LSSMVFHIIPIALEISLVCGILSY) form a helical membrane-spanning segment. Position 271 (Asn271) is a topological domain, mitochondrial intermembrane. A helical transmembrane segment spans residues 272-292 (FGWKYALVTGATMVSYAIFTI). The Mitochondrial matrix portion of the chain corresponds to 293-358 (TTTSWRTKFR…ASIKIATSLA (66 aa)). Glutathione-binding positions include 298 to 302 (RTKFR) and 361 to 364 (NSGQ). A helical transmembrane segment spans residues 359 to 377 (FLNSGQNLIFSSALTAMMY). The Mitochondrial intermembrane segment spans residues 378–392 (MTCCGVADGSLTVGD). Residues 393 to 414 (LVLVNQLVFQLSVPLNFLGSVY) form a helical membrane-spanning segment. Gly411 lines the glutathione pocket. At 415–710 (RDLRQSLLDM…AEEKAAKKDV (296 aa)) the chain is on the mitochondrial matrix side. An ABC transporter domain is found at 453–687 (IRFENVTYGY…DGLYKSMWDA (235 aa)). Residues Tyr462 and 486 to 497 (GPSGSGKSTILK) contribute to the ATP site.

This sequence belongs to the ABC transporter superfamily. ABCB family. Heavy Metal importer (TC 3.A.1.210) subfamily. Homodimer.

It is found in the mitochondrion inner membrane. Performs an essential function in the generation of cytoplasmic iron-sulfur proteins by mediating the ATP-dependent export of Fe/S cluster precursors synthesized by NFS1 and other mitochondrial proteins. Hydrolyzes ATP. Binds glutathione and may function by transporting a glutathione-conjugated iron-sulfur compound. This is Iron-sulfur clusters transporter ATM1, mitochondrial from Yarrowia lipolytica (strain CLIB 122 / E 150) (Yeast).